The following is a 161-amino-acid chain: Ribonuclease P protein component 2 (161 aa).

The protein belongs to the eukaryotic/archaeal RNase P protein component 2 family. In terms of assembly, consists of a catalytic RNA component and at least 4-5 protein subunits.

It is found in the cytoplasm. The enzyme catalyses Endonucleolytic cleavage of RNA, removing 5'-extranucleotides from tRNA precursor.. Part of ribonuclease P, a protein complex that generates mature tRNA molecules by cleaving their 5'-ends. This is Ribonuclease P protein component 2 from Haloarcula marismortui (strain ATCC 43049 / DSM 3752 / JCM 8966 / VKM B-1809) (Halobacterium marismortui).